Consider the following 565-residue polypeptide: NAD-dependent malic enzyme (565 aa).

Catalysis depends on Tyr-104, which acts as the Proton donor. Arg-157 provides a ligand contact to NAD(+). The Proton acceptor role is filled by Lys-175. Residues Glu-246, Asp-247, and Asp-270 each coordinate a divalent metal cation. Residues Asp-270 and Asn-418 each contribute to the NAD(+) site.

The protein belongs to the malic enzymes family. As to quaternary structure, homotetramer. The cofactor is Mg(2+). Requires Mn(2+) as cofactor.

It catalyses the reaction (S)-malate + NAD(+) = pyruvate + CO2 + NADH. The enzyme catalyses oxaloacetate + H(+) = pyruvate + CO2. This is NAD-dependent malic enzyme from Salmonella dublin (strain CT_02021853).